Reading from the N-terminus, the 157-residue chain is Small ribosomal subunit protein uS7 (157 aa).

The protein belongs to the universal ribosomal protein uS7 family. As to quaternary structure, part of the 30S ribosomal subunit. Contacts proteins S9 and S11.

Its function is as follows. One of the primary rRNA binding proteins, it binds directly to 16S rRNA where it nucleates assembly of the head domain of the 30S subunit. Is located at the subunit interface close to the decoding center, probably blocks exit of the E-site tRNA. The protein is Small ribosomal subunit protein uS7 of Chlamydia muridarum (strain MoPn / Nigg).